The chain runs to 121 residues: Basic phospholipase A2 F17 (121 aa).

7 cysteine pairs are disulfide-bonded: cysteine 25/cysteine 114, cysteine 27/cysteine 43, cysteine 42/cysteine 94, cysteine 48/cysteine 121, cysteine 49/cysteine 87, cysteine 56/cysteine 80, and cysteine 74/cysteine 85. Residues tyrosine 26, glycine 28, and glycine 30 each contribute to the Ca(2+) site. Histidine 46 is an active-site residue. Residue aspartate 47 coordinates Ca(2+). Aspartate 88 is a catalytic residue.

Belongs to the phospholipase A2 family. Group II subfamily. D49 sub-subfamily. In terms of assembly, when this protein is associated with crotapotin (F5 or F7), it forms the crotoxin protein. Requires Ca(2+) as cofactor. In terms of tissue distribution, expressed by the venom gland.

It localises to the secreted. The enzyme catalyses a 1,2-diacyl-sn-glycero-3-phosphocholine + H2O = a 1-acyl-sn-glycero-3-phosphocholine + a fatty acid + H(+). Its activity is regulated as follows. Activated by heparin. Inhibited by its chaperone crotapotin. Its function is as follows. Snake venom phospholipase A2 (PLA2) that has anticoagulant activity and inhibits bactericial growth of the Gram-negative bacteria Xanthomonas axonopodis pv. passiflorae (in monomeric form). PLA2 catalyzes the calcium-dependent hydrolysis of the 2-acyl groups in 3-sn-phosphoglycerides. The polypeptide is Basic phospholipase A2 F17 (Crotalus durissus terrificus (South American rattlesnake)).